The chain runs to 144 residues: Large ribosomal subunit protein uL13 (144 aa).

The protein belongs to the universal ribosomal protein uL13 family. In terms of assembly, part of the 50S ribosomal subunit.

In terms of biological role, this protein is one of the early assembly proteins of the 50S ribosomal subunit, although it is not seen to bind rRNA by itself. It is important during the early stages of 50S assembly. This is Large ribosomal subunit protein uL13 from Nitratidesulfovibrio vulgaris (strain DSM 19637 / Miyazaki F) (Desulfovibrio vulgaris).